The chain runs to 355 residues: MSEEQFGGDGAAAAATAAVGGSAGEQEGAMVAAAAQGPAAAAGSGSGGGGSAAGGTEGGSAEAEGAKIDASKNEEDEGHSNSSPRHTEAAAAQREEWKMFIGGLSWDTTKKDLKDYFSKFGEVVDCTLKLDPITGRSRGFGFVLFKESESVDKVMDQKEHKLNGKVIDPKRAKAMKTKEPVKKIFVGGLSPDTPEEKIREYFGGFGEVESIELPMDNKTNKRRGFCFITFKEEEPVKKIMEKKYHNVGLSKCEIKVAMSKEQYQQQQQWGSRGGFAGRARGRGGGPSQNWNQGYSNYWNQGYGNYGYNSQGYGGYGGYDYTGYNNYYGYGDYSNQQSGYGKVSRRGGHQNSYKPY.

Positions 1 to 91 (MSEEQFGGDG…SSPRHTEAAA (91 aa)) are disordered. S2 bears the N-acetylserine mark. Over residues 11 to 43 (AAAAATAAVGGSAGEQEGAMVAAAAQGPAAAAG) the composition is skewed to low complexity. Positions 44–58 (SGSGGGGSAAGGTEG) are enriched in gly residues. Over residues 64–73 (EGAKIDASKN) the composition is skewed to basic and acidic residues. Residue S71 is modified to Phosphoserine. A Glycyl lysine isopeptide (Lys-Gly) (interchain with G-Cter in SUMO2) cross-link involves residue K72. Phosphoserine is present on residues S80, S82, and S83. RRM domains are found at residues 97–179 (WKMF…KTKE) and 182–261 (KKIF…MSKE). K119 is subject to N6-methyllysine. T127 carries the post-translational modification Phosphothreonine. Residue K129 forms a Glycyl lysine isopeptide (Lys-Gly) (interchain with G-Cter in SUMO2) linkage. K165 carries the post-translational modification N6-acetyllysine. Position 190 is a phosphoserine (S190). Phosphothreonine is present on T193. K197 participates in a covalent cross-link: Glycyl lysine isopeptide (Lys-Gly) (interchain with G-Cter in SUMO2). N6-acetyllysine occurs at positions 243 and 251. E261 and Y263 each carry omega-N-methylarginine. S271 carries the post-translational modification Phosphoserine. An omega-N-methylarginine mark is found at R272, R278, R280, and R282. Residue R345 is modified to Asymmetric dimethylarginine; alternate. A Dimethylated arginine; alternate modification is found at R345. R345 carries the post-translational modification Omega-N-methylarginine; alternate.

In terms of assembly, identified in a IGF2BP1-dependent mRNP granule complex containing untranslated mRNAs. Part of a complex associated with the FOS mCRD domain and consisting of PABPC1, PAIP1, CSDE1/UNR and SYNCRIP. Interacts with IGF2BP2. Interacts with GTPBP1. Interacts with EIF4G1; the interaction requires RNA. Interacts with EIF3B and RPS3. Methylated by PRMT1, in an insulin-dependent manner. The PRMT1-mediated methylation regulates its phosphorylation. Post-translationally, arg-345 is dimethylated, probably to asymmetric dimethylarginine.

It localises to the nucleus. It is found in the cytoplasm. In terms of biological role, binds with high affinity to RNA molecules that contain AU-rich elements (AREs) found within the 3'-UTR of many proto-oncogenes and cytokine mRNAs. Also binds to double- and single-stranded DNA sequences in a specific manner and functions a transcription factor. Each of the RNA-binding domains specifically can bind solely to a single-stranded non-monotonous 5'-UUAG-3' sequence and also weaker to the single-stranded 5'-TTAGGG-3' telomeric DNA repeat. Binds RNA oligonucleotides with 5'-UUAGGG-3' repeats more tightly than the telomeric single-stranded DNA 5'-TTAGGG-3' repeats. Binding of RRM1 to DNA inhibits the formation of DNA quadruplex structure which may play a role in telomere elongation. May be involved in translationally coupled mRNA turnover. Implicated with other RNA-binding proteins in the cytoplasmic deadenylation/translational and decay interplay of the FOS mRNA mediated by the major coding-region determinant of instability (mCRD) domain. May play a role in the regulation of the rhythmic expression of circadian clock core genes. Directly binds to the 3'UTR of CRY1 mRNA and induces CRY1 rhythmic translation. May also be involved in the regulation of PER2 translation. The polypeptide is Heterogeneous nuclear ribonucleoprotein D0 (Hnrnpd) (Mus musculus (Mouse)).